A 289-amino-acid chain; its full sequence is MIFAKGHGTQNDFVLLPDVDAELVLTAARVAALCDRRKGLGADGVLRVTTAGAAQAVGVLDSLPEGVRVTDWYMDYRNADGSAAQMCGNGVRVFAHYLRASGLEVRDEFVVGSLAGPRPVTCHHVEAAYADVSVDMGKANRLGAGEAVVGGRRFHGLAVDVGNPHLACVDSQLTVDGLAALDVGAPVSFDGAQFPDGVNVEVLTAPVDGAVWMRVHERGVGETRSCGTGTVAAAVAALAAVGSPTGTLTVHVPGGEVVVTVTDATSFLRGPSVLVARGDLADDWWNAMG.

2 residues coordinate substrate: Asn-11 and Asn-78. The active-site Proton donor is Cys-87. Residues 88 to 89 (GN), Asn-163, Asn-199, and 217 to 218 (ER) contribute to the substrate site. Cys-226 acts as the Proton acceptor in catalysis. 227-228 (GT) provides a ligand contact to substrate.

It belongs to the diaminopimelate epimerase family. Homodimer.

It is found in the cytoplasm. It catalyses the reaction (2S,6S)-2,6-diaminopimelate = meso-2,6-diaminopimelate. It functions in the pathway amino-acid biosynthesis; L-lysine biosynthesis via DAP pathway; DL-2,6-diaminopimelate from LL-2,6-diaminopimelate: step 1/1. Its function is as follows. Catalyzes the stereoinversion of LL-2,6-diaminopimelate (L,L-DAP) to meso-diaminopimelate (meso-DAP), a precursor of L-lysine and an essential component of the bacterial peptidoglycan. The protein is Diaminopimelate epimerase of Mycobacterium bovis (strain ATCC BAA-935 / AF2122/97).